A 202-amino-acid polypeptide reads, in one-letter code: Syndecan-4 (202 aa).

The signal sequence occupies residues 1–22 (MASPRLLALLLLLVGAFNAAAA). Topologically, residues 23–152 (ESIRETEVIN…NIFERTEVLS (130 aa)) are extracellular. Disordered stretches follow at residues 41–75 (YFSG…GPED) and 87–112 (VPLD…ELEE). O-linked (Xyl...) (glycosaminoglycan) serine glycosylation occurs at Ser43. Over residues 46 to 63 (LPDDEDVGGPGQEPDDFE) the composition is skewed to acidic residues. Residues Ser65 and Ser67 are each glycosylated (O-linked (Xyl...) (glycosaminoglycan) serine). The chain crosses the membrane as a helical span at residues 153 to 173 (ALIVGGIVGILFAVFLVLLLV). Over 174-202 (YRMKKKDEGSYDLGKKPIYKKAPTNEFYA) the chain is Cytoplasmic.

It belongs to the syndecan proteoglycan family. In terms of assembly, homodimer. Interacts with CDCP1 and SDCBP. Interacts (via its cytoplasmic domain) with GIPC (via its PDZ domain). Interacts (via its cytoplasmic domain) with NUDT16L1. Interacts with DNM2; this interaction is markedly enhanced at focal ahesion site upon induction of focal adhesions and stress-fiber formation. In terms of processing, shedding, cleavage of the extracellular domain to release a soluble form, is enhanced by a number of factors such as heparanase, growth factor receptor action for example by thrombin or EGF. Physiological events such as stress or wound healing can activate the shedding. PMA-mediated shedding is inhibited by TIMP3. Post-translationally, O-glycosylated; contains both chondroitin sulfate and heparan sulfate. Ser-43, Ser-65 and Ser-67 can all be modified by either chondroitin sulfate or heparan sulfate, and the protein exists in forms that contain only chondroitin sulfate, only heparan sulfate and both chondroitin sulfate and heparan sulfate.

It localises to the membrane. Its subcellular location is the secreted. Cell surface proteoglycan which regulates exosome biogenesis in concert with SDCBP and PDCD6IP. The polypeptide is Syndecan-4 (Sus scrofa (Pig)).